We begin with the raw amino-acid sequence, 405 residues long: CMP-sialic acid transporter 3 (405 aa).

Residues 1 to 39 lie on the Cytoplasmic side of the membrane; the sequence is MKNGIAECPACHSKLVSPGSKTISRAYDDHKIRVSSKQR. The helical transmembrane segment at 40–60 threads the bilayer; the sequence is VLNVLLVVGDCMLVGLQPVLV. The Lumenal portion of the chain corresponds to 61–73; sequence YMSKVDGKFNFSP. Residues 74–94 traverse the membrane as a helical segment; it reads ISVNFLTEIAKVIFAIVMLLI. Residues 95–142 are Cytoplasmic-facing; it reads QARHQKVGEKPLLSVSTFVQAARNNVLLAVPALLYAINNYLKFTMQLY. Residues 143-163 form a helical membrane-spanning segment; sequence FNPATVKMLSNLKVLVIAVLL. At 164-170 the chain is on the lumenal side; the sequence is KMVMKRR. Residues 171 to 191 form a helical membrane-spanning segment; it reads FSIIQWEALALLLIGISVNQL. The Cytoplasmic segment spans residues 192–199; that stretch reads RSLPEGAT. Residues 200 to 220 traverse the membrane as a helical segment; the sequence is AIGIPLATGAYVCTVIFVTVP. Over 221–243 the chain is Lumenal; sequence SMASVFNEYALKSQYDTSIYLQN. Residues 244-264 form a helical membrane-spanning segment; sequence LFLYGYGAIFNFLGILGTVIY. Residues 265-280 lie on the Cytoplasmic side of the membrane; that stretch reads KGPGSFDILQGHSRAT. Residues 281–301 form a helical membrane-spanning segment; it reads MFLILNNAAQGILSSFFFKYA. At 302-321 the chain is on the lumenal side; that stretch reads DTILKKYSSTVATIFTGIAS. Residues 322–342 form a helical membrane-spanning segment; the sequence is AALFGHVITMNFLLGISIVFI. Over 343 to 405 the chain is Cytoplasmic; the sequence is SMHQFFSPLA…SDDRTPLLPR (63 aa). The disordered stretch occupies residues 385–405; that stretch reads GANEEASHRGESDDRTPLLPR. Residues 389–405 show a composition bias toward basic and acidic residues; the sequence is EASHRGESDDRTPLLPR.

The protein belongs to the nucleotide-sugar transporter family. CMP-Sialate:CMP antiporter (TC 2.A.7.12) subfamily.

It localises to the golgi apparatus membrane. Its function is as follows. Sugar transporter involved in the transport of CMP-sialic acid from the cytoplasm into the Golgi. This is CMP-sialic acid transporter 3 (UTR6) from Arabidopsis thaliana (Mouse-ear cress).